The following is a 378-amino-acid chain: Cytochrome b (378 aa).

4 helical membrane-spanning segments follow: residues 34–54 (FGSLLGLCLMLQILTGLFLAM), 78–99 (WFLRICHANGASFFFACLFIHV), 114–134 (WNTGVIILFLTMATGFLGYVL), and 179–199 (FFTFHFIFPFIILALMMIHLL). Positions 84 and 98 each coordinate heme b. Residues His-183 and His-197 each contribute to the heme b site. His-202 contacts a ubiquinone. Transmembrane regions (helical) follow at residues 227–247 (YKDIFGFIVFLWILVTFIWKF), 289–309 (LGGVIALVLSIAILLILPFTH), 321–341 (LNQILFWNMVIVASLLTWIGA), and 348–368 (YILTGQILTVLYFSYFIINPL).

It belongs to the cytochrome b family. As to quaternary structure, the main subunits of complex b-c1 are: cytochrome b, cytochrome c1 and the Rieske protein. Heme b is required as a cofactor.

It is found in the mitochondrion inner membrane. Component of the ubiquinol-cytochrome c reductase complex (complex III or cytochrome b-c1 complex) that is part of the mitochondrial respiratory chain. The b-c1 complex mediates electron transfer from ubiquinol to cytochrome c. Contributes to the generation of a proton gradient across the mitochondrial membrane that is then used for ATP synthesis. This chain is Cytochrome b (mt:Cyt-b), found in Anopheles gambiae (African malaria mosquito).